The primary structure comprises 938 residues: Ubiquitin carboxyl-terminal hydrolase Usp2 (938 aa).

6 disordered regions span residues 1 to 53 (MMLD…KVGA), 91 to 117 (KVKT…NTSR), 130 to 254 (FNGN…ISTT), 273 to 297 (EQNQ…HRYP), 360 to 410 (LSGQ…NLQQ), and 500 to 610 (KDAT…EKSE). The span at 22-36 (STTKTSSVVATSASS) shows a compositional bias: low complexity. 4 stretches are compositionally biased toward low complexity: residues 137–158 (TTTN…NTSN), 167–177 (STTATATSTST), 198–227 (MNGH…QRQQ), and 275–289 (NQVQ…PSSS). A compositionally biased stretch (polar residues) spans 392-410 (ASRSNHGSQAGGSSSNLQQ). Low complexity-rich tracts occupy residues 502–555 (ATTA…TARS) and 574–583 (TSRSSIGTSS). Residues 592–610 (HNSDDGYKTASSSRDEKSE) are compositionally biased toward basic and acidic residues. The USP domain occupies 613–938 (CGLRNIGNTC…SAYILFYERT (326 aa)). Cys-622 serves as the catalytic Nucleophile. Cys-765, Cys-768, Cys-814, and Cys-817 together coordinate Zn(2+). His-895 (proton acceptor) is an active-site residue.

The protein belongs to the peptidase C19 family. Interacts (via N-terminus) with imd (via N-terminus). Interacts with Rpt6.

The enzyme catalyses Thiol-dependent hydrolysis of ester, thioester, amide, peptide and isopeptide bonds formed by the C-terminal Gly of ubiquitin (a 76-residue protein attached to proteins as an intracellular targeting signal).. Functionally, hydrolase that deubiquitinates polyubiquitinated target proteins. Required for preventing the activation of the Toll signaling cascades under unchallenged conditions. Essential for bodily calcium homeostasis. Its function is as follows. Required for preventing the activation of the immune deficiency (Imd) signaling cascade under unchallenged conditions. Regulates the Imd pathway by specifically removing 'Lys-48'-linked ubiquitin from imd. Also promotes imd degradation probably by binding to imd and enhancing its association with the proteasome. This Drosophila melanogaster (Fruit fly) protein is Ubiquitin carboxyl-terminal hydrolase Usp2.